Reading from the N-terminus, the 389-residue chain is Stilbene synthase 1 (389 aa).

55 to 58 provides a ligand contact to substrate; sequence KFQR. C164 is a catalytic residue. Residues L267 and 305–307 each bind substrate; that span reads GGR.

The protein belongs to the thiolase-like superfamily. Chalcone/stilbene synthases family. As to quaternary structure, homodimer.

It is found in the cytoplasm. The catalysed reaction is 4-coumaroyl-CoA + 3 malonyl-CoA + 3 H(+) = trans-resveratrol + 4 CO2 + 4 CoA. Its pathway is phytoalexin biosynthesis; 3,4',5-trihydroxystilbene biosynthesis; 3,4',5-trihydroxystilbene from trans-4-coumarate: step 2/2. The sequence is that of Stilbene synthase 1 from Arachis hypogaea (Peanut).